The chain runs to 367 residues: Cobalt-precorrin-5B C(1)-methyltransferase (367 aa).

It belongs to the CbiD family.

It carries out the reaction Co-precorrin-5B + S-adenosyl-L-methionine = Co-precorrin-6A + S-adenosyl-L-homocysteine. It functions in the pathway cofactor biosynthesis; adenosylcobalamin biosynthesis; cob(II)yrinate a,c-diamide from sirohydrochlorin (anaerobic route): step 6/10. In terms of biological role, catalyzes the methylation of C-1 in cobalt-precorrin-5B to form cobalt-precorrin-6A. This Priestia megaterium (Bacillus megaterium) protein is Cobalt-precorrin-5B C(1)-methyltransferase.